We begin with the raw amino-acid sequence, 566 residues long: Multidrug and toxin extrusion protein 1 (566 aa).

Met-1 is subject to N-acetylmethionine. The next 13 membrane-spanning stretches (helical) occupy residues 37 to 57, 72 to 92, 120 to 140, 152 to 172, 176 to 196, 216 to 236, 257 to 276, 295 to 315, 336 to 356, 370 to 390, 409 to 429, 437 to 457, and 543 to 563; these read LLVLAGPAFLAQLMMFLISFI, AVTLAIAVINVTGISVGHGLS, LILLLCCFPCWALFINTEQIL, LTQTYVMVFIPALPAAFLYTL, YLLNQGIVLPQVITGIAANLV, ALANTISQFALAIFLFLYILW, SFLQLAIPSMLMLCIEWWAY, SITYELAIIVYMIPAGFSVAA, AISLIVTELFAVTFCVLLLGC, IVALVAQVVPIYAVSHLFEAL, IVNAIGYYVIGLPIGISLMFV, LWSGIIICSVCQTSCFLVFIA, and GLLFLGVVLVLVGGILVRVYI.

The protein belongs to the multi antimicrobial extrusion (MATE) (TC 2.A.66.1) family. As to expression, highly expressed in kidney and placenta, moderately in stomach, colon, lung, spleen, skeletal muscle and prostate, and slightly in spleen. In the kidney, found in medulla and cortex, especially in the proximal convoluted and straight tubules. No expression was observed in heart, brain, small intestine and liver. Expressed in Sertoli cells in testis.

Its subcellular location is the cell membrane. The protein resides in the apical cell membrane. The catalysed reaction is thiamine(out) + H(+)(in) = thiamine(in) + H(+)(out). It catalyses the reaction estrone 3-sulfate(in) + H(+)(out) = estrone 3-sulfate(out) + H(+)(in). The enzyme catalyses creatinine(in) + H(+)(out) = creatinine(out) + H(+)(in). It carries out the reaction agmatine(in) + H(+)(out) = agmatine(out) + H(+)(in). Functionally, multidrug efflux pump that functions as a H(+)/organic cation antiporter. Plays a physiological role in the excretion of cationic compounds including endogenous metabolites, drugs, toxins through the kidney and liver, into urine and bile respectively. Mediates the efflux of endogenous compounds such as creatinine, vitamin B1/thiamine, agmatine and estrone-3-sulfate. May also contribute to regulate the transport of cationic compounds in testis across the blood-testis-barrier. The polypeptide is Multidrug and toxin extrusion protein 1 (Slc47a1) (Rattus norvegicus (Rat)).